Reading from the N-terminus, the 112-residue chain is CLAVATA3/ESR (CLE)-related protein 44 (112 aa).

The N-terminal stretch at 1 to 39 (MATTIDQTSIKSLHFHQVIRLIITIIFLAFLFLIGPTSS) is a signal peptide. A disordered region spans residues 41–112 (NHHLHESSSK…VPSGPNPISN (72 aa)). Polar residues predominate over residues 62–71 (QPSTPSSSTM). Hydroxyproline occurs at positions 104 and 107. Proline 107 carries O-linked (Ara...) hydroxyproline glycosylation.

This sequence belongs to the CLV3/ESR signal peptide family. In terms of assembly, interacts specifically with the leucine-rich repeat receptor-like protein kinase TDR, especially in the presence of SERK2. The O-glycosylation (arabinosylation) of the hydroxyproline Pro-107 enhances binding affinity of the CLE44p peptide for its receptor. As to expression, mostly expressed in flowers and leaves. Widely expressed along the vascular strands. In roots and hypocotyls, present in endodermal cells as well as cells in the phloem and the adjacent pericycle.

It is found in the secreted. It localises to the extracellular space. Its function is as follows. Extracellular signal peptide that regulates cell fate. May act with TDR as a ligand-receptor pair in a signal transduction pathway that represses tracheary element differentiation but promotes the formation of procambial cells adjacent to phloem cells in the veins. Regulates the transition of protophloem cells from proliferation to differentiation, thus impinging on postembryonic growth capacity of the root meristem; this signaling pathway requires CRN and CLV2. This Arabidopsis thaliana (Mouse-ear cress) protein is CLAVATA3/ESR (CLE)-related protein 44.